The primary structure comprises 533 residues: Flavin-containing monooxygenase 5 (533 aa).

A Dimethylated arginine modification is found at Arg5. Residues 10 to 14 (GGGVS), Glu33, and 41 to 42 (LW) each bind FAD. Position 54 is a phosphoserine (Ser54). At Tyr56 the chain carries Phosphotyrosine. Position 58 is a phosphoserine (Ser58). 62–63 (NT) provides a ligand contact to FAD. Position 196-199 (196-199 (SGGD)) interacts with NADP(+). Ser280 is subject to Phosphoserine. Thr284 carries the post-translational modification Phosphothreonine. Ser401 carries the post-translational modification Phosphoserine. Residues 513–533 (TMTIGKFMLALAFFAIIIAYF) form a helical membrane-spanning segment.

The protein belongs to the FMO family. FAD is required as a cofactor. As to expression, expressed in fetal and adult liver.

The protein localises to the microsome membrane. Its subcellular location is the endoplasmic reticulum membrane. The catalysed reaction is N,N-dimethylaniline + NADPH + O2 + H(+) = N,N-dimethylaniline N-oxide + NADP(+) + H2O. It catalyses the reaction NADPH + O2 + H(+) = H2O2 + NADP(+). The enzyme catalyses heptan-2-one + NADPH + O2 + H(+) = pentyl acetate + NADP(+) + H2O. It carries out the reaction octan-3-one + NADPH + O2 + H(+) = pentyl propanoate + NADP(+) + H2O. The catalysed reaction is octan-3-one + NADPH + O2 + H(+) = ethyl hexanoate + NADP(+) + H2O. It catalyses the reaction hexan-3-one + NADPH + O2 + H(+) = ethyl butanoate + NADP(+) + H2O. The enzyme catalyses hexan-3-one + NADPH + O2 + H(+) = propyl propanoate + NADP(+) + H2O. It carries out the reaction heptan-4-one + NADPH + O2 + H(+) = propyl butanoate + NADP(+) + H2O. The catalysed reaction is (2E)-geranial + NADPH + O2 + H(+) = (1E)-2,6-dimethylhepta-1,5-dien-1-yl formate + NADP(+) + H2O. It catalyses the reaction sulcatone + NADPH + O2 + H(+) = 4-methylpent-3-en-1-yl acetate + NADP(+) + H2O. Acts as a Baeyer-Villiger monooxygenase on a broad range of substrates. Catalyzes the insertion of an oxygen atom into a carbon-carbon bond adjacent to a carbonyl, which converts ketones to esters. Active on diverse carbonyl compounds, whereas soft nucleophiles are mostly non- or poorly reactive. In contrast with other forms of FMO it is non- or poorly active on 'classical' substrates such as drugs, pesticides, and dietary components containing soft nucleophilic heteroatoms. Able to oxidize drug molecules bearing a carbonyl group on an aliphatic chain, such as nabumetone and pentoxifylline. Also, in the absence of substrates, shows slow but yet significant NADPH oxidase activity. Acts as a positive modulator of cholesterol biosynthesis as well as glucose homeostasis, promoting metabolic aging via pleiotropic effects. In Homo sapiens (Human), this protein is Flavin-containing monooxygenase 5.